We begin with the raw amino-acid sequence, 96 residues long: MCCTKSLLLAALMSVLLLHLCGESEAASNFDCCLGYTDRILHPKFIVGFTRQLANEGCDINAIIFHTKKKLSVCANPKQTWVKYIVRLLSKKVKNM.

The signal sequence occupies residues 1–26 (MCCTKSLLLAALMSVLLLHLCGESEA). 2 disulfides stabilise this stretch: Cys-32–Cys-58 and Cys-33–Cys-74.

Belongs to the intercrine beta (chemokine CC) family. In terms of processing, C-terminal processed forms which lack 1, 3 or 6 amino acids are produced by proteolytic cleavage after secretion from peripheral blood monocytes. Expressed in the seminal plasma, endometrial fluid and follicular fluid (at protein level). Expressed predominantly in the liver, lymph nodes, appendix, peripheral blood lymphocytes, and fetal lung. Low levels seen in thymus, prostate, testis, small intestine and colon.

It is found in the secreted. Its function is as follows. Acts as a ligand for C-C chemokine receptor CCR6. Signals through binding and activation of CCR6 and induces a strong chemotactic response and mobilization of intracellular calcium ions. The ligand-receptor pair CCL20-CCR6 is responsible for the chemotaxis of dendritic cells (DC), effector/memory T-cells and B-cells and plays an important role at skin and mucosal surfaces under homeostatic and inflammatory conditions, as well as in pathology, including cancer and various autoimmune diseases. CCL20 acts as a chemotactic factor that attracts lymphocytes and, slightly, neutrophils, but not monocytes. Involved in the recruitment of both the pro-inflammatory IL17 producing helper T-cells (Th17) and the regulatory T-cells (Treg) to sites of inflammation. Required for optimal migration of thymic natural regulatory T cells (nTregs) and DN1 early thymocyte progenitor cells. C-terminal processed forms have been shown to be equally chemotactically active for leukocytes. Positively regulates sperm motility and chemotaxis via its binding to CCR6 which triggers Ca2+ mobilization in the sperm which is important for its motility. Inhibits proliferation of myeloid progenitors in colony formation assays. May be involved in formation and function of the mucosal lymphoid tissues by attracting lymphocytes and dendritic cells towards epithelial cells. Possesses antibacterial activity towards E.coli ATCC 25922 and S.aureus ATCC 29213. The sequence is that of C-C motif chemokine 20 (CCL20) from Homo sapiens (Human).